The following is a 266-amino-acid chain: UPF0294 protein Ent638_0743 (266 aa).

This sequence belongs to the UPF0294 family.

It localises to the cytoplasm. This is UPF0294 protein Ent638_0743 from Enterobacter sp. (strain 638).